Consider the following 336-residue polypeptide: Terephthalate 1,2-dioxygenase, reductase component 2 (336 aa).

The 2Fe-2S ferredoxin-type domain occupies 3–91; it reads HQIHIHDSDI…DIRIHPSSFR (89 aa). Cysteine 37, cysteine 42, cysteine 45, and cysteine 75 together coordinate [2Fe-2S] cluster. Residues 98–197 enclose the FAD-binding FR-type domain; it reads RKRFTAKVYS…ELPFGSIALK (100 aa).

In terms of assembly, monomer. Part of a multicomponent enzyme system composed of a reductase (TphA1I or TphA1II) and a two-subunit oxygenase component (TphA2I or TphA2II and TphA3I or TphA3II). Requires FAD as cofactor. The cofactor is [2Fe-2S] cluster.

The enzyme catalyses terephthalate + NADH + O2 + H(+) = (3S,4R)-3,4-dihydroxycyclohexa-1,5-diene-1,4-dicarboxylate + NAD(+). Functionally, component of the terephthalate 1,2-dioxygenase multicomponent enzyme system which catalyzes the dioxygenation of terephthalate (TER/TPA) to 1,2-dihydroxy-3,5-cyclohexadiene-1,4-dicarboxylic acid (DCD). TphA1 probably reduces TphA2A3. It can also use 2,5-dicarboxypyridine (PDC) and 1,4-napthalenedicarboxylic acid (NDC) as substrates, and preferentially uses NADPH which is the physiological electron donor. The sequence is that of Terephthalate 1,2-dioxygenase, reductase component 2 (tphA1II) from Comamonas sp.